A 204-amino-acid chain; its full sequence is Large ribosomal subunit protein uL10 (204 aa).

Residues 170 to 204 (AADPSVIGGAGEASDQEPKTTETPEASAAQDNTNE) form a disordered region. Positions 192–204 (TPEASAAQDNTNE) are enriched in polar residues.

It belongs to the universal ribosomal protein uL10 family. Part of the ribosomal stalk of the 50S ribosomal subunit. The N-terminus interacts with L11 and the large rRNA to form the base of the stalk. The C-terminus forms an elongated spine to which L12 dimers bind in a sequential fashion forming a multimeric L10(L12)X complex.

Functionally, forms part of the ribosomal stalk, playing a central role in the interaction of the ribosome with GTP-bound translation factors. This Cutibacterium acnes (strain DSM 16379 / KPA171202) (Propionibacterium acnes) protein is Large ribosomal subunit protein uL10.